Reading from the N-terminus, the 485-residue chain is Glutamyl-tRNA(Gln) amidotransferase subunit A (485 aa).

Residues lysine 76 and serine 152 each act as charge relay system in the active site. Serine 176 functions as the Acyl-ester intermediate in the catalytic mechanism.

It belongs to the amidase family. GatA subfamily. As to quaternary structure, heterotrimer of A, B and C subunits.

The enzyme catalyses L-glutamyl-tRNA(Gln) + L-glutamine + ATP + H2O = L-glutaminyl-tRNA(Gln) + L-glutamate + ADP + phosphate + H(+). Its function is as follows. Allows the formation of correctly charged Gln-tRNA(Gln) through the transamidation of misacylated Glu-tRNA(Gln) in organisms which lack glutaminyl-tRNA synthetase. The reaction takes place in the presence of glutamine and ATP through an activated gamma-phospho-Glu-tRNA(Gln). This is Glutamyl-tRNA(Gln) amidotransferase subunit A from Dechloromonas aromatica (strain RCB).